Here is a 407-residue protein sequence, read N- to C-terminus: Carbamoyl phosphate synthase small chain (407 aa).

Positions 1–205 (MTETTPKTAP…LQDGYGEQDA (205 aa)) are CPSase. Positions 60, 257, and 259 each coordinate L-glutamine. A Glutamine amidotransferase type-1 domain is found at 209-397 (HVVALDFGVK…INLIRERKGQ (189 aa)). Residue C286 is the Nucleophile of the active site. 5 residues coordinate L-glutamine: L287, Q290, N328, G330, and F331. Catalysis depends on residues H370 and E372.

It belongs to the CarA family. As to quaternary structure, composed of two chains; the small (or glutamine) chain promotes the hydrolysis of glutamine to ammonia, which is used by the large (or ammonia) chain to synthesize carbamoyl phosphate. Tetramer of heterodimers (alpha,beta)4.

The catalysed reaction is hydrogencarbonate + L-glutamine + 2 ATP + H2O = carbamoyl phosphate + L-glutamate + 2 ADP + phosphate + 2 H(+). It catalyses the reaction L-glutamine + H2O = L-glutamate + NH4(+). It participates in amino-acid biosynthesis; L-arginine biosynthesis; carbamoyl phosphate from bicarbonate: step 1/1. It functions in the pathway pyrimidine metabolism; UMP biosynthesis via de novo pathway; (S)-dihydroorotate from bicarbonate: step 1/3. Its function is as follows. Small subunit of the glutamine-dependent carbamoyl phosphate synthetase (CPSase). CPSase catalyzes the formation of carbamoyl phosphate from the ammonia moiety of glutamine, carbonate, and phosphate donated by ATP, constituting the first step of 2 biosynthetic pathways, one leading to arginine and/or urea and the other to pyrimidine nucleotides. The small subunit (glutamine amidotransferase) binds and cleaves glutamine to supply the large subunit with the substrate ammonia. This Brucella suis (strain ATCC 23445 / NCTC 10510) protein is Carbamoyl phosphate synthase small chain.